The sequence spans 341 residues: UDP-N-acetylenolpyruvoylglucosamine reductase (341 aa).

In terms of domain architecture, FAD-binding PCMH-type spans 13–185; it reads FGVEQSCLSM…TAVGLRLPKA (173 aa). Residue Arg161 is part of the active site. The Proton donor role is filled by Ser231. The active site involves Glu327.

The protein belongs to the MurB family. FAD is required as a cofactor.

It localises to the cytoplasm. It catalyses the reaction UDP-N-acetyl-alpha-D-muramate + NADP(+) = UDP-N-acetyl-3-O-(1-carboxyvinyl)-alpha-D-glucosamine + NADPH + H(+). Its pathway is cell wall biogenesis; peptidoglycan biosynthesis. Cell wall formation. The polypeptide is UDP-N-acetylenolpyruvoylglucosamine reductase (Shewanella sp. (strain MR-7)).